A 52-amino-acid chain; its full sequence is Large ribosomal subunit protein eL39 (52 aa).

This sequence belongs to the eukaryotic ribosomal protein eL39 family.

This is Large ribosomal subunit protein eL39 (RPL39) from Tetrahymena thermophila (strain SB210).